Consider the following 37-residue polypeptide: Small ribosomal subunit protein eS32 (37 aa).

This sequence belongs to the eukaryotic ribosomal protein eS32 family. Part of the small ribosomal subunit.

The polypeptide is Small ribosomal subunit protein eS32 (Pyrococcus furiosus (strain ATCC 43587 / DSM 3638 / JCM 8422 / Vc1)).